Here is a 633-residue protein sequence, read N- to C-terminus: DEAD-box ATP-dependent RNA helicase 27 (633 aa).

Over residues methionine 1–lysine 17 the composition is skewed to basic and acidic residues. The disordered stretch occupies residues methionine 1–glutamate 147. Residues alanine 2 to glutamine 34 adopt a coiled-coil conformation. Composition is skewed to acidic residues over residues methionine 37–aspartate 47 and aspartate 74–glutamate 83. Residues lysine 88–glutamine 97 are compositionally biased toward basic residues. Composition is skewed to acidic residues over residues asparagine 103–glutamate 114 and serine 131–glutamate 140. Residues lysine 117–asparagine 153 adopt a coiled-coil conformation. The Q motif motif lies at lysine 154–alanine 182. The region spanning isoleucine 185–isoleucine 360 is the Helicase ATP-binding domain. Alanine 198–threonine 205 is a binding site for ATP. Residues aspartate 308–aspartate 311 carry the DEAD box motif. The Helicase C-terminal domain occupies arginine 386–leucine 534. A disordered region spans residues lysine 608 to tyrosine 633.

The protein belongs to the DEAD box helicase family. DDX18/HAS1 subfamily.

The catalysed reaction is ATP + H2O = ADP + phosphate + H(+). In Arabidopsis thaliana (Mouse-ear cress), this protein is DEAD-box ATP-dependent RNA helicase 27 (RH27).